The primary structure comprises 640 residues: Biosynthetic arginine decarboxylase (640 aa).

At Lys-105 the chain carries N6-(pyridoxal phosphate)lysine. Residue 290–300 (FDVGGGLAIDY) participates in substrate binding.

Belongs to the Orn/Lys/Arg decarboxylase class-II family. SpeA subfamily. Mg(2+) is required as a cofactor. Requires pyridoxal 5'-phosphate as cofactor.

The catalysed reaction is L-arginine + H(+) = agmatine + CO2. In terms of biological role, catalyzes the biosynthesis of agmatine from arginine. The protein is Biosynthetic arginine decarboxylase of Vibrio vulnificus (strain CMCP6).